The following is a 239-amino-acid chain: Fatty acid metabolism regulator protein (239 aa).

Positions 6–74 (QSPAGFAEEY…HGKPTKVNNF (69 aa)) constitute an HTH gntR-type domain. A DNA-binding region (H-T-H motif) is located at residues 34-53 (ERELSELIGVTRTTLREVLQ).

As to quaternary structure, homodimer.

Its subcellular location is the cytoplasm. Functionally, multifunctional regulator of fatty acid metabolism. The polypeptide is Fatty acid metabolism regulator protein (Yersinia enterocolitica serotype O:8 / biotype 1B (strain NCTC 13174 / 8081)).